Here is a 510-residue protein sequence, read N- to C-terminus: tRNA-2-methylthio-N(6)-dimethylallyladenosine synthase (510 aa).

Residues 19 to 144 (RTYQVRTFGC…LPVLLERARH (126 aa)) form the MTTase N-terminal domain. Cysteine 28, cysteine 73, cysteine 107, cysteine 181, cysteine 185, and cysteine 188 together coordinate [4Fe-4S] cluster. The Radical SAM core domain maps to 167 to 397 (RESPYAAWVS…TALQDRITYE (231 aa)). The 71-residue stretch at 400-470 (QAQTGRTLEV…PHYLEADDVS (71 aa)) folds into the TRAM domain. The span at 482-492 (AWEARQARPEP) shows a compositional bias: basic and acidic residues. Residues 482-510 (AWEARQARPEPESTGPRPVGLGLPTLRRA) are disordered.

It belongs to the methylthiotransferase family. MiaB subfamily. As to quaternary structure, monomer. [4Fe-4S] cluster is required as a cofactor.

Its subcellular location is the cytoplasm. It carries out the reaction N(6)-dimethylallyladenosine(37) in tRNA + (sulfur carrier)-SH + AH2 + 2 S-adenosyl-L-methionine = 2-methylsulfanyl-N(6)-dimethylallyladenosine(37) in tRNA + (sulfur carrier)-H + 5'-deoxyadenosine + L-methionine + A + S-adenosyl-L-homocysteine + 2 H(+). Its function is as follows. Catalyzes the methylthiolation of N6-(dimethylallyl)adenosine (i(6)A), leading to the formation of 2-methylthio-N6-(dimethylallyl)adenosine (ms(2)i(6)A) at position 37 in tRNAs that read codons beginning with uridine. This is tRNA-2-methylthio-N(6)-dimethylallyladenosine synthase from Kineococcus radiotolerans (strain ATCC BAA-149 / DSM 14245 / SRS30216).